The following is a 233-amino-acid chain: Ribose-5-phosphate isomerase A (233 aa).

Residues 28–31, 83–86, and 96–99 contribute to the substrate site; these read SGST, DGAD, and KGGG. The active-site Proton acceptor is E105. K123 lines the substrate pocket.

Belongs to the ribose 5-phosphate isomerase family. Homodimer.

The catalysed reaction is aldehydo-D-ribose 5-phosphate = D-ribulose 5-phosphate. It functions in the pathway carbohydrate degradation; pentose phosphate pathway; D-ribose 5-phosphate from D-ribulose 5-phosphate (non-oxidative stage): step 1/1. In terms of biological role, catalyzes the reversible conversion of ribose-5-phosphate to ribulose 5-phosphate. This is Ribose-5-phosphate isomerase A from Maricaulis maris (strain MCS10) (Caulobacter maris).